The chain runs to 396 residues: Protein ANTAGONIST OF LIKE HETEROCHROMATIN PROTEIN 1 (396 aa).

2 stretches are compositionally biased toward basic residues: residues 1–12 (MAPVKQKKKNKK) and 20–29 (KLAKNKEKKR). Residues 1–29 (MAPVKQKKKNKKKPLDKAKKLAKNKEKKR) are disordered. Residues 6 to 13 (QKKKNKKK) carry the Nuclear localization signal motif. The region spanning 183 to 348 (IDTTHIIMTL…IILVCCLLHN (166 aa)) is the DDE Tnp4 domain.

It belongs to the HARBI1 family. Interacts with core components of POLYCOMB REPRESSIVE COMPLEX 2 (PRC2), a PcG protein complex with H3K27me3 histone methyltransferase activity. Associates with plant-specific PRC2 accessory components such as MSI1, EMF2, VRN2, FIE and CLF. Requires a divalent metal cation as cofactor. Expressed in roots, inflorescence stems, seedlings, leaves, flower buds, inflorescences, and siliques.

Its subcellular location is the nucleus. Transposase-derived protein that may have nuclease activity. Antagonist of polycomb-group (PcG) protein-mediated chromatin silencing, probably by preventing the association of POLYCOMB REPRESSIVE COMPLEX 2 (PRC2) with its accessory components. Needed for full reactivation of several floral homeotic genes that are repressed by PcG. This is Protein ANTAGONIST OF LIKE HETEROCHROMATIN PROTEIN 1 from Arabidopsis thaliana (Mouse-ear cress).